A 78-amino-acid chain; its full sequence is MDILKKSLFLVLFLGLVSLSICEEEKRENEDEEKQDDEQSEMKRAMWKDVLKKIGTVALHAGKAALGAVADTISQGEQ.

The N-terminal stretch at 1-22 (MDILKKSLFLVLFLGLVSLSIC) is a signal peptide. Positions 23 to 42 (EEEKRENEDEEKQDDEQSEM) are excised as a propeptide. At Gln-75 the chain carries Glutamine amide. Positions 76-78 (GEQ) are excised as a propeptide.

Belongs to the frog skin active peptide (FSAP) family. Dermaseptin subfamily. Expressed by the skin glands.

Its subcellular location is the secreted. In terms of biological role, possesses a potent antimicrobial activity against bacteria, fungi and protozoa. Probably acts by disturbing membrane functions with its amphipathic structure. This is Dermaseptin-B1 from Phyllomedusa bicolor (Two-colored leaf frog).